The chain runs to 123 residues: Seminal vesicle secretory protein 5 (123 aa).

The N-terminal stretch at 1–21 (MSPTGFFLLTVLLVLVTEAAS) is a signal peptide. Residues 50-123 (GSSSTFGAFS…TKVKTRITRK (74 aa)) are disordered. Residues 64–75 (SRSNFKSKSPSS) show a composition bias toward low complexity. The segment covering 77-87 (TREKVNEESRS) has biased composition (basic and acidic residues).

The protein belongs to the SVP2/SVP5/SVP6 family. Testis.

Its subcellular location is the secreted. It is found in the extracellular space. The polypeptide is Seminal vesicle secretory protein 5 (Svs5) (Rattus norvegicus (Rat)).